We begin with the raw amino-acid sequence, 166 residues long: Phosphopantetheine adenylyltransferase (166 aa).

Residue Ser-9 participates in substrate binding. ATP-binding positions include 9-10 (SF) and His-17. Lys-41, Leu-74, and Lys-88 together coordinate substrate. ATP is bound by residues 89-91 (GLR), Glu-99, and 123-129 (YIHLSST).

This sequence belongs to the bacterial CoaD family. In terms of assembly, homohexamer. Mg(2+) serves as cofactor.

It localises to the cytoplasm. It carries out the reaction (R)-4'-phosphopantetheine + ATP + H(+) = 3'-dephospho-CoA + diphosphate. It participates in cofactor biosynthesis; coenzyme A biosynthesis; CoA from (R)-pantothenate: step 4/5. In terms of biological role, reversibly transfers an adenylyl group from ATP to 4'-phosphopantetheine, yielding dephospho-CoA (dPCoA) and pyrophosphate. This Pseudarthrobacter chlorophenolicus (strain ATCC 700700 / DSM 12829 / CIP 107037 / JCM 12360 / KCTC 9906 / NCIMB 13794 / A6) (Arthrobacter chlorophenolicus) protein is Phosphopantetheine adenylyltransferase.